The sequence spans 565 residues: Beta-hexosaminidase subunit beta (565 aa).

The first 13 residues, 1 to 13, serve as a signal peptide directing secretion; the sequence is MIVLLLLISYCFA. N71 is a glycosylation site (N-linked (GlcNAc...) asparagine). E347 (proton donor) is an active-site residue.

This sequence belongs to the glycosyl hydrolase 20 family. As to quaternary structure, heterodimer of one alpha subunit and one beta subunit. In terms of processing, glycosylated.

It localises to the cytoplasmic granule. The protein resides in the secreted. It carries out the reaction Hydrolysis of terminal non-reducing N-acetyl-D-hexosamine residues in N-acetyl-beta-D-hexosaminides.. In terms of biological role, hydrolyzes the non-reducing end N-acetyl-D-hexosamine and/or sulfated N-acetyl-D-hexosamine of glycoconjugates. May contribute to amoebic pathogenicity and may be involved in the destruction of extracellular matrix components. This Entamoeba histolytica (strain ATCC 30459 / HM-1:IMSS / ABRM) protein is Beta-hexosaminidase subunit beta.